We begin with the raw amino-acid sequence, 461 residues long: MLSEREVISTLNMLRNEHLDVRTVTLGVSLFDCVSHDLELFTANVQAKIRRYASQLVSVCDEVGDKYGIPVVNKRISVSPIAVVAAPFGPDGMVRVCKALDEAAKEAGVDFLGGFSALVEKGFANGDRALIEALPEALAQTDRICSSINVASSRSGINMDAVALMGRQILRVAEATADRGGIGCAKLVVFANIPQDVPFMAGAYLGVGEPDVVINVGVSGPGVVKKALDRAREAGRNEKGAPLTLLDMAEVIKRTAYKVTRVGEMIGTEVATRLGIPFGVADLSLAPTPAVGDSVGEIFQSLGLSSIGAPGTTAVLAMLNDAVKKGGAFASSSVGGLSGAFIPVSEDSSIEAAATAGLLSIEKLEAMTSVCSVGLDMIAIPGDTPAATISGIIADEMAIGMINHKTTAVRLIPVPGKGVGEEVSFGGLLGKAAIMPVPGGNAEDFITLGGRIPAPIHSLKN.

This sequence belongs to the UPF0210 family. Homodimer.

This Desulfovibrio desulfuricans (strain ATCC 27774 / DSM 6949 / MB) protein is UPF0210 protein Ddes_0622.